The chain runs to 819 residues: DNA topoisomerase 4 subunit A (819 aa).

In terms of domain architecture, Topo IIA-type catalytic spans 30–496 (LPDIRDGLKP…QIIEIDTASL (467 aa)). Residue Tyr118 is the O-(5'-phospho-DNA)-tyrosine intermediate of the active site.

The protein belongs to the type II topoisomerase GyrA/ParC subunit family. ParC type 2 subfamily. As to quaternary structure, heterotetramer composed of ParC and ParE.

It is found in the cell membrane. The enzyme catalyses ATP-dependent breakage, passage and rejoining of double-stranded DNA.. Topoisomerase IV is essential for chromosome segregation. It relaxes supercoiled DNA. Performs the decatenation events required during the replication of a circular DNA molecule. In Streptococcus pyogenes serotype M18 (strain MGAS8232), this protein is DNA topoisomerase 4 subunit A.